The sequence spans 329 residues: L-lactate dehydrogenase (329 aa).

NAD(+)-binding positions include V18, E39, K46, Y71, and 85–86; that span reads GA. Positions 88 and 94 each coordinate substrate. Residues S107, 124–126, and S149 each bind NAD(+); that span reads AAN. 126–129 lines the substrate pocket; that stretch reads NPVD. 154 to 157 is a substrate binding site; that stretch reads DSAR. Residues R159 and H174 each coordinate beta-D-fructose 1,6-bisphosphate. H181 functions as the Proton acceptor in the catalytic mechanism. Y226 is modified (phosphotyrosine). Substrate is bound at residue T235.

It belongs to the LDH/MDH superfamily. LDH family. In terms of assembly, homotetramer.

It is found in the cytoplasm. It catalyses the reaction (S)-lactate + NAD(+) = pyruvate + NADH + H(+). It functions in the pathway fermentation; pyruvate fermentation to lactate; (S)-lactate from pyruvate: step 1/1. With respect to regulation, allosterically activated by fructose 1,6-bisphosphate (FBP). Its function is as follows. Catalyzes the conversion of lactate to pyruvate. The sequence is that of L-lactate dehydrogenase from Streptococcus agalactiae serotype V (strain ATCC BAA-611 / 2603 V/R).